Here is a 117-residue protein sequence, read N- to C-terminus: Aspartate 1-decarboxylase (117 aa).

Serine 25 acts as the Schiff-base intermediate with substrate; via pyruvic acid in catalysis. Position 25 is a pyruvic acid (Ser) (serine 25). Threonine 57 provides a ligand contact to substrate. Catalysis depends on tyrosine 58, which acts as the Proton donor. 72–74 (GAA) serves as a coordination point for substrate.

It belongs to the PanD family. As to quaternary structure, heterooctamer of four alpha and four beta subunits. Pyruvate is required as a cofactor. Is synthesized initially as an inactive proenzyme, which is activated by self-cleavage at a specific serine bond to produce a beta-subunit with a hydroxyl group at its C-terminus and an alpha-subunit with a pyruvoyl group at its N-terminus.

It is found in the cytoplasm. The catalysed reaction is L-aspartate + H(+) = beta-alanine + CO2. It functions in the pathway cofactor biosynthesis; (R)-pantothenate biosynthesis; beta-alanine from L-aspartate: step 1/1. Functionally, catalyzes the pyruvoyl-dependent decarboxylation of aspartate to produce beta-alanine. In Helicobacter pylori (strain ATCC 700392 / 26695) (Campylobacter pylori), this protein is Aspartate 1-decarboxylase.